The chain runs to 404 residues: MIRNGHGAASAAGLKGPGDQRIVRVWCDGCYDMVHYGHSNQLRQARAMGDYLIVGVHTDEEIAKHKGPPVFTQEERYKMVQAIKWVDEVVPAAPYVTTLETLDKHNCDFCVHGNDITLTVDGRDTYEEVKQAGRYRECKRTQGVSTTDLVGRMLLVTKAHHSSQEMSSEYREYADSFGKPPHPTPAGDTLSSEVSSQCPGGQSPWTGVSQFLQTSQKIIQFASGKEPQPGETVIYVAGAFDLFHIGHVDFLQEVHKLAKRPYVIAGLHFDQEVNRYKGKNYPIMNLHERTLSVLACRYVSEVVIGAPYSVTAELLNHFKVDLVCHGKTEIVPDRDGSDPYQEPKRRGIFYQIDSGSDLTTDLIVQRIIKNRLEYEARNQKKEAKELAFLEATKQQEAPPGGEID.

Positions 173–201 (YADSFGKPPHPTPAGDTLSSEVSSQCPGG) are disordered. Polar residues predominate over residues 189–201 (TLSSEVSSQCPGG). CTP-binding positions include 239 to 240 (AF), 247 to 250 (HVDF), lysine 277, 325 to 328 (HGKT), and 354 to 358 (SGSDL). The residue at position 356 (serine 356) is a Phosphoserine. 2 positions are modified to phosphothreonine: threonine 359 and threonine 360.

The protein belongs to the cytidylyltransferase family.

It catalyses the reaction phosphoethanolamine + CTP + H(+) = CDP-ethanolamine + diphosphate. It functions in the pathway phospholipid metabolism; phosphatidylethanolamine biosynthesis; phosphatidylethanolamine from ethanolamine: step 2/3. Ethanolamine-phosphate cytidylyltransferase that catalyzes the second step in the synthesis of phosphatidylethanolamine (PE) from ethanolamine via the CDP-ethanolamine pathway. Phosphatidylethanolamine is a dominant inner-leaflet phospholipid in cell membranes, where it plays a role in membrane function by structurally stabilizing membrane-anchored proteins, and participates in important cellular processes such as cell division, cell fusion, blood coagulation, and apoptosis. This chain is Ethanolamine-phosphate cytidylyltransferase (Pcyt2), found in Mus musculus (Mouse).